The chain runs to 456 residues: Putative F-box/LRR-repeat protein At3g18150 (456 aa).

The 49-residue stretch at 30–78 (VDSISSLPDVILQHILSFIPTKLAITTSLLSKRWRHVWCDTPSLSFNDY) folds into the F-box domain. LRR repeat units lie at residues 177–202 (TCLL…TLDH), 203–213 (CGGLRVLDLSK), 228–253 (VPEL…KLPC), 278–303 (KADF…TLGG), 333–358 (IFQY…TLLT), and 396–422 (CLDV…DKMV).

The sequence is that of Putative F-box/LRR-repeat protein At3g18150 from Arabidopsis thaliana (Mouse-ear cress).